A 189-amino-acid polypeptide reads, in one-letter code: MSYLRPSLVMLILLTLITGIAYPLLTTGLSQLLFSGAANGSLLYQGDKVVGSALIGQNFTKPEYFWGRPSATADSAYNAMASAGSNLAATNPALDKAIAERAAQLRQANPAMKGPIPVDLLTASGSGLDPQISLAAAQYQLARVAAARQLAPEQITKLIDESTDQATPNFMGESVVNVLKLNLALDALK.

Residues 8–28 (LVMLILLTLITGIAYPLLTTG) form a helical membrane-spanning segment.

This sequence belongs to the KdpC family. In terms of assembly, the system is composed of three essential subunits: KdpA, KdpB and KdpC.

The protein resides in the cell inner membrane. Functionally, part of the high-affinity ATP-driven potassium transport (or Kdp) system, which catalyzes the hydrolysis of ATP coupled with the electrogenic transport of potassium into the cytoplasm. This subunit acts as a catalytic chaperone that increases the ATP-binding affinity of the ATP-hydrolyzing subunit KdpB by the formation of a transient KdpB/KdpC/ATP ternary complex. This is Potassium-transporting ATPase KdpC subunit from Serratia proteamaculans (strain 568).